A 413-amino-acid polypeptide reads, in one-letter code: CinA-like protein (413 aa).

It belongs to the CinA family.

The polypeptide is CinA-like protein (Geobacter sulfurreducens (strain ATCC 51573 / DSM 12127 / PCA)).